Consider the following 147-residue polypeptide: 3-dehydroquinate dehydratase (147 aa).

Catalysis depends on Y23, which acts as the Proton acceptor. Residues N74, H80, and D87 each coordinate substrate. H100 functions as the Proton donor in the catalytic mechanism. Substrate-binding positions include 101 to 102 (IS) and R111.

It belongs to the type-II 3-dehydroquinase family. Homododecamer.

The catalysed reaction is 3-dehydroquinate = 3-dehydroshikimate + H2O. Its pathway is metabolic intermediate biosynthesis; chorismate biosynthesis; chorismate from D-erythrose 4-phosphate and phosphoenolpyruvate: step 3/7. Functionally, catalyzes a trans-dehydration via an enolate intermediate. The polypeptide is 3-dehydroquinate dehydratase (Prochlorococcus marinus (strain MIT 9301)).